Here is a 334-residue protein sequence, read N- to C-terminus: WD repeat domain 54 (334 aa).

3 WD repeats span residues 162–206, 208–247, and 250–289; these read GHQT…TLLT, IAGFGVPCPSVQLWQGIVAAGYGNGQVRLYDAGTGALHIQ, and AHARTISALDLAPEVGKLLSAAEDTFVHIWKLNRNPESGS.

Homodimer and homotrimer; forms tight forms of dimers and trimers. Interacts with IZUMO1 and IZUMO1R/JUNO. In terms of processing, cross-linked to tightly form both dimers and trimers by TGM2. Cross-linking enhances the activation of EGF receptor-mediated signaling pathway. Cross-linking is inhibited by EGF. Post-translationally, ubiquitinated. EGF increases ubiquitination. As to expression, widely expressed in the ovary and testis (at protein level).

It localises to the vesicle. The protein resides in the cytoplasm. Its subcellular location is the cell membrane. Functionally, plays a role in the adhesion and fusion of the sperm-oocyte membrane through its interactions with IZUMO1 and IZUMO1R/JUNO. When cross-linked to form dimers and trimers, it has a regulatory effect on ERK signaling pathway activity in response to EGF stimulation. Colocalizes with the EGF receptor in WDR54-specific vesicle where it sustains the internalization and controls the degradation of the EGF receptor after EGF stimulation. The sequence is that of WD repeat domain 54 (Wdr54) from Rattus norvegicus (Rat).